A 161-amino-acid chain; its full sequence is MKIRIGHGFDVHKFGAARPLILCGVEVPYETGLVAHSDGDVVLHAISDAILGALALGDIGKHFPDTDAAYKGADSRVLLRHCYALARAKGFVLGNLDVTIIAQVPKMAPHIEAMRQILAADLTSELDDINVKATTTEHLGFTGRKEGIAVEAVVLMTRKHD.

A divalent metal cation-binding residues include D10 and H12. 4-CDP-2-C-methyl-D-erythritol 2-phosphate is bound by residues 10-12 (DVH) and 36-37 (HS). Residue H44 coordinates a divalent metal cation. Residues 58-60 (DIG), 63-67 (FPDTD), 102-108 (AQVPKMA), 134-137 (TTTE), F141, and R144 each bind 4-CDP-2-C-methyl-D-erythritol 2-phosphate.

This sequence belongs to the IspF family. As to quaternary structure, homotrimer. It depends on a divalent metal cation as a cofactor.

It catalyses the reaction 4-CDP-2-C-methyl-D-erythritol 2-phosphate = 2-C-methyl-D-erythritol 2,4-cyclic diphosphate + CMP. Its pathway is isoprenoid biosynthesis; isopentenyl diphosphate biosynthesis via DXP pathway; isopentenyl diphosphate from 1-deoxy-D-xylulose 5-phosphate: step 4/6. Its function is as follows. Involved in the biosynthesis of isopentenyl diphosphate (IPP) and dimethylallyl diphosphate (DMAPP), two major building blocks of isoprenoid compounds. Catalyzes the conversion of 4-diphosphocytidyl-2-C-methyl-D-erythritol 2-phosphate (CDP-ME2P) to 2-C-methyl-D-erythritol 2,4-cyclodiphosphate (ME-CPP) with a corresponding release of cytidine 5-monophosphate (CMP). This chain is 2-C-methyl-D-erythritol 2,4-cyclodiphosphate synthase, found in Shewanella baltica (strain OS223).